The sequence spans 105 residues: MALRYPMAVGLNKGHKVTKNVSKPRHSRRRGRLTKHTKFVRDMIREVCGFAPYERRAMELLKVSKDKRALKFIKKRVGTHIRAKRKREELSNVLAAMRKAAAKKD.

Lysine 62 is subject to N6-acetyllysine.

The protein belongs to the eukaryotic ribosomal protein eL36 family. As to quaternary structure, component of the large ribosomal subunit.

The protein resides in the cytoplasm. Its subcellular location is the cytosol. Component of the large ribosomal subunit. The ribosome is a large ribonucleoprotein complex responsible for the synthesis of proteins in the cell. This chain is Large ribosomal subunit protein eL36 (RPL36), found in Homo sapiens (Human).